The following is a 65-amino-acid chain: Metallothionein-like protein type 3 (65 aa).

The protein belongs to the metallothionein superfamily. Type 15 family.

In terms of biological role, metallothioneins have a high content of cysteine residues that bind various heavy metals. This Musa acuminata (Banana) protein is Metallothionein-like protein type 3.